The sequence spans 61 residues: GRRPCCNECGICDRSLDPMCICEDLVPQCHEGCQACEEVDTGTPMYQCRSFEYYHCGTPCL.

Disulfide bonds link C5–C60, C6–C22, C9–C56, C12–C20, C29–C36, and C33–C48.

The protein belongs to the Bowman-Birk serine protease inhibitor family. In terms of tissue distribution, expressed in bulb (at protein level).

Its function is as follows. Serine protease inhibitor. Inhibits trypsin (Ki = 41 nM) and weakly inhibits chymotrypsin (Ki = 410 nM). Does not inhibit bacterial subtilisin. This is Bowman-Birk type proteinase inhibitor B5 from Hyacinthus orientalis (Common hyacinth).